A 108-amino-acid chain; its full sequence is Pyrimidine/purine nucleoside phosphorylase (108 aa).

This sequence belongs to the nucleoside phosphorylase PpnP family.

It catalyses the reaction a purine D-ribonucleoside + phosphate = a purine nucleobase + alpha-D-ribose 1-phosphate. The enzyme catalyses adenosine + phosphate = alpha-D-ribose 1-phosphate + adenine. The catalysed reaction is cytidine + phosphate = cytosine + alpha-D-ribose 1-phosphate. It carries out the reaction guanosine + phosphate = alpha-D-ribose 1-phosphate + guanine. It catalyses the reaction inosine + phosphate = alpha-D-ribose 1-phosphate + hypoxanthine. The enzyme catalyses thymidine + phosphate = 2-deoxy-alpha-D-ribose 1-phosphate + thymine. The catalysed reaction is uridine + phosphate = alpha-D-ribose 1-phosphate + uracil. It carries out the reaction xanthosine + phosphate = alpha-D-ribose 1-phosphate + xanthine. Its function is as follows. Catalyzes the phosphorolysis of diverse nucleosides, yielding D-ribose 1-phosphate and the respective free bases. Can use uridine, adenosine, guanosine, cytidine, thymidine, inosine and xanthosine as substrates. Also catalyzes the reverse reactions. This chain is Pyrimidine/purine nucleoside phosphorylase, found in Acinetobacter baumannii (strain AB307-0294).